Here is an 83-residue protein sequence, read N- to C-terminus: Molybdopterin synthase sulfur carrier subunit (83 aa).

Glycine 83 is subject to 1-thioglycine; alternate. Glycine 83 bears the Glycyl adenylate; alternate mark.

This sequence belongs to the MoaD family. MOCS2A subfamily. In terms of assembly, heterotetramer; composed of 2 small (MOCS2A) and 2 large (MOCS2B) subunits. In terms of processing, C-terminal thiocarboxylation occurs in 2 steps, it is first acyl-adenylated (-COAMP) via the hesA/moeB/thiF part of MOCS3, then thiocarboxylated (-COSH) via the rhodanese domain of MOCS3.

It localises to the cytoplasm. The protein operates within cofactor biosynthesis; molybdopterin biosynthesis. Functionally, acts as a sulfur carrier required for molybdopterin biosynthesis. Component of the molybdopterin synthase complex that catalyzes the conversion of precursor Z into molybdopterin by mediating the incorporation of 2 sulfur atoms into precursor Z to generate a dithiolene group. In the complex, serves as sulfur donor by being thiocarboxylated (-COSH) at its C-terminus by MOCS3. After interaction with MOCS2B, the sulfur is then transferred to precursor Z to form molybdopterin. The protein is Molybdopterin synthase sulfur carrier subunit of Chlamydomonas reinhardtii (Chlamydomonas smithii).